Consider the following 222-residue polypeptide: Phosphoribosylformylglycinamidine synthase subunit PurQ (222 aa).

The Glutamine amidotransferase type-1 domain occupies 3 to 222; it reads SAVIQLPGLN…LFESVLGRAA (220 aa). Cysteine 86 acts as the Nucleophile in catalysis. Catalysis depends on residues histidine 196 and glutamate 198.

As to quaternary structure, part of the FGAM synthase complex composed of 1 PurL, 1 PurQ and 2 PurS subunits.

The protein localises to the cytoplasm. It carries out the reaction N(2)-formyl-N(1)-(5-phospho-beta-D-ribosyl)glycinamide + L-glutamine + ATP + H2O = 2-formamido-N(1)-(5-O-phospho-beta-D-ribosyl)acetamidine + L-glutamate + ADP + phosphate + H(+). The catalysed reaction is L-glutamine + H2O = L-glutamate + NH4(+). The protein operates within purine metabolism; IMP biosynthesis via de novo pathway; 5-amino-1-(5-phospho-D-ribosyl)imidazole from N(2)-formyl-N(1)-(5-phospho-D-ribosyl)glycinamide: step 1/2. Its function is as follows. Part of the phosphoribosylformylglycinamidine synthase complex involved in the purines biosynthetic pathway. Catalyzes the ATP-dependent conversion of formylglycinamide ribonucleotide (FGAR) and glutamine to yield formylglycinamidine ribonucleotide (FGAM) and glutamate. The FGAM synthase complex is composed of three subunits. PurQ produces an ammonia molecule by converting glutamine to glutamate. PurL transfers the ammonia molecule to FGAR to form FGAM in an ATP-dependent manner. PurS interacts with PurQ and PurL and is thought to assist in the transfer of the ammonia molecule from PurQ to PurL. The chain is Phosphoribosylformylglycinamidine synthase subunit PurQ from Chelativorans sp. (strain BNC1).